The chain runs to 57 residues: COP9 signalosome complex subunit 9 (57 aa).

It belongs to the CSN9 family. As to quaternary structure, component of the CSN complex, probably composed of cops1, cops2, cops3, cops4, cops5, cops6, cops7, cops8 and cops9.

It is found in the nucleus. The protein resides in the cytoplasm. It localises to the nucleoplasm. Its function is as follows. Component of the COP9 signalosome complex (CSN), a complex involved in various cellular and developmental processes. The CSN complex is an essential regulator of the ubiquitin (Ubl) conjugation pathway by mediating the deneddylation of the cullin subunits of SCF-type E3 ligase complexes, leading to decrease the Ubl ligase activity. May play a role in cell proliferation. This is COP9 signalosome complex subunit 9 from Xenopus tropicalis (Western clawed frog).